Here is a 392-residue protein sequence, read N- to C-terminus: Erythronate-4-phosphate dehydrogenase (392 aa).

Substrate is bound by residues serine 48 and threonine 69. Aspartate 149 is an NAD(+) binding site. Arginine 215 is a catalytic residue. Residue aspartate 239 coordinates NAD(+). Residue glutamate 244 is part of the active site. The active-site Proton donor is histidine 261. Glycine 264 serves as a coordination point for NAD(+). Residue tyrosine 265 coordinates substrate.

Belongs to the D-isomer specific 2-hydroxyacid dehydrogenase family. PdxB subfamily. As to quaternary structure, homodimer.

Its subcellular location is the cytoplasm. The enzyme catalyses 4-phospho-D-erythronate + NAD(+) = (R)-3-hydroxy-2-oxo-4-phosphooxybutanoate + NADH + H(+). It functions in the pathway cofactor biosynthesis; pyridoxine 5'-phosphate biosynthesis; pyridoxine 5'-phosphate from D-erythrose 4-phosphate: step 2/5. In terms of biological role, catalyzes the oxidation of erythronate-4-phosphate to 3-hydroxy-2-oxo-4-phosphonooxybutanoate. This chain is Erythronate-4-phosphate dehydrogenase, found in Salinibacter ruber (strain DSM 13855 / M31).